A 330-amino-acid chain; its full sequence is DNA-directed RNA polymerase subunit alpha (330 aa).

The segment at 1 to 225 is alpha N-terminal domain (alpha-NTD); that stretch reads MSDLAIPTIS…KQFAALVSHN (225 aa). Residues 237 to 330 form an alpha C-terminal domain (alpha-CTD) region; it reads VKYAIPEEKY…KKKNKGMDEA (94 aa).

It belongs to the RNA polymerase alpha chain family. As to quaternary structure, homodimer. The RNAP catalytic core consists of 2 alpha, 1 beta, 1 beta' and 1 omega subunit. When a sigma factor is associated with the core the holoenzyme is formed, which can initiate transcription.

It carries out the reaction RNA(n) + a ribonucleoside 5'-triphosphate = RNA(n+1) + diphosphate. DNA-dependent RNA polymerase catalyzes the transcription of DNA into RNA using the four ribonucleoside triphosphates as substrates. This is DNA-directed RNA polymerase subunit alpha from Dehalococcoides mccartyi (strain ATCC BAA-2266 / KCTC 15142 / 195) (Dehalococcoides ethenogenes (strain 195)).